The sequence spans 238 residues: Valine-rich protein (238 aa).

Residues 1 to 16 form the signal peptide; sequence MQAVLLVVALFGAALA.

As to expression, prismatic layer of shell (at protein level). Expressed primarily in the mantle with highest level in the mantle edge and lower level in the mantle pallium.

It is found in the secreted. This Margaritifera margaritifera (Freshwater pearl mussel) protein is Valine-rich protein.